Reading from the N-terminus, the 345-residue chain is S-adenosylmethionine:tRNA ribosyltransferase-isomerase (345 aa).

The protein belongs to the QueA family. As to quaternary structure, monomer.

It is found in the cytoplasm. The enzyme catalyses 7-aminomethyl-7-carbaguanosine(34) in tRNA + S-adenosyl-L-methionine = epoxyqueuosine(34) in tRNA + adenine + L-methionine + 2 H(+). It participates in tRNA modification; tRNA-queuosine biosynthesis. Transfers and isomerizes the ribose moiety from AdoMet to the 7-aminomethyl group of 7-deazaguanine (preQ1-tRNA) to give epoxyqueuosine (oQ-tRNA). The sequence is that of S-adenosylmethionine:tRNA ribosyltransferase-isomerase from Helicobacter pylori (strain P12).